Here is a 241-residue protein sequence, read N- to C-terminus: GTP cyclohydrolase 1 (241 aa).

The propeptide occupies 1–11 (MEKPRGVRCTN). The disordered stretch occupies residues 1 to 58 (MEKPRGVRCTNGFPERELPRPGASRPAEKSRPPEAKGAQPADAWKAGRPRSEEDNELN). Residues serine 51 and serine 72 each carry the phosphoserine modification. The Zn(2+) site is built by cysteine 132, histidine 135, and cysteine 203.

It belongs to the GTP cyclohydrolase I family. As to quaternary structure, toroid-shaped homodecamer, composed of two pentamers of five dimers. Interacts with AHSA1 and GCHFR/GFRP. In terms of processing, phosphorylated.

It localises to the cytoplasm. The protein resides in the nucleus. It carries out the reaction GTP + H2O = 7,8-dihydroneopterin 3'-triphosphate + formate + H(+). The protein operates within cofactor biosynthesis; 7,8-dihydroneopterin triphosphate biosynthesis; 7,8-dihydroneopterin triphosphate from GTP: step 1/1. With respect to regulation, GTP shows a positive allosteric effect, and tetrahydrobiopterin inhibits the enzyme activity. Zinc is required for catalytic activity. Inhibited by Mg(2+). In terms of biological role, may positively regulate nitric oxide synthesis in endothelial cells. May be involved in dopamine synthesis. May modify pain sensitivity and persistence. In Rattus norvegicus (Rat), this protein is GTP cyclohydrolase 1 (Gch1).